The following is a 336-amino-acid chain: MNHQIHIHDSDIAFPCAPGQSVLDAALQAGIELPYSCRKGSCGNCASTLLDGNIASFNGMAVRNELCASEQVLLCGCTAASDIRIHPSSFRRLDPEARKRFTAKVYSNTLAAPDVSLLRLRLPVGKRAKFEAGQYLLIHLDDGESRSYSMANPPHESDGITLHVRHVPGGRFSTIVQQLKSGDTLDIELPFGSIALKPDDARPLICVAGGTGFAPIKSVLDDLAKRKVQRDITLIWGARNPSGLYLPSAIDKWRKVWPQFRYIAAITDLGDMPADAHAGRVDDALRTHFGNLHDHVVHCCGSPALVQSVRTAASDMGLLAQDFHADVFATGPTGHH.

Residues His3–Arg91 form the 2Fe-2S ferredoxin-type domain. Cys37, Cys42, Cys45, and Cys75 together coordinate [2Fe-2S] cluster. The region spanning Arg98–Lys197 is the FAD-binding FR-type domain.

Monomer. Part of a multicomponent enzyme system composed of a reductase (TphA1I or TphA1II) and a two-subunit oxygenase component (TphA2I or TphA2II and TphA3I or TphA3II). Requires FAD as cofactor. The cofactor is [2Fe-2S] cluster.

It carries out the reaction terephthalate + NADH + O2 + H(+) = (3S,4R)-3,4-dihydroxycyclohexa-1,5-diene-1,4-dicarboxylate + NAD(+). Component of the terephthalate 1,2-dioxygenase multicomponent enzyme system which catalyzes the dioxygenation of terephthalate (TER/TPA) to 1,2-dihydroxy-3,5-cyclohexadiene-1,4-dicarboxylic acid (DCD). TphA1 probably reduces TphA2A3. It can also use 2,5-dicarboxypyridine (PDC) and 1,4-napthalenedicarboxylic acid (NDC) as substrates, and preferentially uses NADPH which is the physiological electron donor. In Comamonas sp, this protein is Terephthalate 1,2-dioxygenase, reductase component 2 (tphA1II).